The chain runs to 447 residues: Tetratricopeptide repeat protein 23 (447 aa).

TPR repeat units lie at residues 45-78 (LHLC…TRIC), 137-170 (IELF…SKEL), 186-219 (ARIR…VEIS), and 356-389 (AETY…QTLL).

In terms of assembly, found Associated with the EvC complex composed of EFCAB7, IQCE, EVC2 and EVC.

The protein localises to the cell projection. It is found in the cilium. Its function is as follows. Participates positively in the ciliary Hedgehog (Hh) signaling. The polypeptide is Tetratricopeptide repeat protein 23 (TTC23) (Homo sapiens (Human)).